The primary structure comprises 221 residues: Response regulator protein PmrA (221 aa).

The region spanning 2–116 (RILLAEDDLL…ELQARVRALT (115 aa)) is the Response regulatory domain. D51 is modified (4-aspartylphosphate). The segment at residues 124–218 (LPQLVHGELR…VRGIGYGIDQ (95 aa)) is a DNA-binding region (ompR/PhoB-type).

It is found in the cytoplasm. Functionally, member of the two-component regulatory system PmrA/PmrB that plays a role in the regulation of resistance towards polymyxin B and cationic antimicrobial peptides in response to limiting concentrations of Mg(2+). Functions as a transcriptional activator by direct binding to a cis-acting sequence upstream of the target gene promoters including lipase lipA and pmrH promoters. Also autoregulates its own pmrAB operon under Mg(2+)-limiting conditions. The protein is Response regulator protein PmrA (pmrA) of Pseudomonas aeruginosa (strain ATCC 15692 / DSM 22644 / CIP 104116 / JCM 14847 / LMG 12228 / 1C / PRS 101 / PAO1).